The primary structure comprises 386 residues: 17-hydroxy-3-oxo-4-pregnene-20-carboxyl-CoA lyase (386 aa).

Tyr-292 acts as the Proton acceptor in catalysis. The active-site Proton donor is the Tyr-342.

Belongs to the thiolase-like superfamily. In terms of assembly, homodimer. Interacts with the ChsH1/ChsH2 hydratase via the DUF35 C-terminal region of ChsH2 (ChsH2-DUF35). The ChsH1-ChsH2-Ltp2 protein complex is composed of two protomers that form a heterohexameric structure through the Ltp2 dimerization interface.

It catalyses the reaction 17-hydroxy-3-oxochol-4-en-22-oyl-CoA = androst-4-ene-3,17-dione + propanoyl-CoA. It functions in the pathway steroid metabolism; cholesterol degradation. Functionally, involved in cholesterol side chain degradation. When associated with the ChsH1/ChsH2 hydratase, catalyzes the retroaldol cleavage of 17-hydroxy-3-oxo-4-pregnene-20-carboxyl-CoA (17-HOPC-CoA) produced by the hydratase, forming androst-4-ene-3,17-dione and propionyl-CoA. The sequence is that of 17-hydroxy-3-oxo-4-pregnene-20-carboxyl-CoA lyase from Mycobacterium tuberculosis (strain ATCC 25618 / H37Rv).